The primary structure comprises 76 residues: Translational regulator CsrA (76 aa).

This sequence belongs to the CsrA/RsmA family. Homodimer; the beta-strands of each monomer intercalate to form a hydrophobic core, while the alpha-helices form wings that extend away from the core.

It localises to the cytoplasm. Its function is as follows. A translational regulator that binds mRNA to regulate translation initiation and/or mRNA stability. Usually binds in the 5'-UTR at or near the Shine-Dalgarno sequence preventing ribosome-binding, thus repressing translation. Its main target seems to be the major flagellin gene, while its function is anatagonized by FliW. This is Translational regulator CsrA from Helicobacter pylori (strain P12).